We begin with the raw amino-acid sequence, 322 residues long: Glycerol-3-phosphate dehydrogenase [NAD(P)+] (322 aa).

NADPH-binding residues include tryptophan 11, arginine 31, arginine 32, and lysine 101. Lysine 101 and glycine 130 together coordinate sn-glycerol 3-phosphate. Alanine 134 contributes to the NADPH binding site. Sn-glycerol 3-phosphate contacts are provided by lysine 184, aspartate 237, serine 247, arginine 248, and asparagine 249. Lysine 184 acts as the Proton acceptor in catalysis. An NADPH-binding site is contributed by arginine 248. Valine 270 and glutamate 272 together coordinate NADPH.

The protein belongs to the NAD-dependent glycerol-3-phosphate dehydrogenase family.

It localises to the cytoplasm. It carries out the reaction sn-glycerol 3-phosphate + NAD(+) = dihydroxyacetone phosphate + NADH + H(+). The catalysed reaction is sn-glycerol 3-phosphate + NADP(+) = dihydroxyacetone phosphate + NADPH + H(+). It participates in membrane lipid metabolism; glycerophospholipid metabolism. Its function is as follows. Catalyzes the reduction of the glycolytic intermediate dihydroxyacetone phosphate (DHAP) to sn-glycerol 3-phosphate (G3P), the key precursor for phospholipid synthesis. The protein is Glycerol-3-phosphate dehydrogenase [NAD(P)+] of Thermus thermophilus (strain ATCC BAA-163 / DSM 7039 / HB27).